The sequence spans 273 residues: N(omega)-hydroxy-L-arginine amidinohydrolase (273 aa).

Mn(2+) is bound by residues D109, H111, D113, D198, and D200.

It belongs to the arginase family. Mn(2+) serves as cofactor.

It catalyses the reaction N(omega)-hydroxy-L-arginine + H2O = hydroxyurea + L-ornithine. Functionally, involved in the biosynthesis of the antibiotic D-cycloserine (DCS), a cyclic structural analog of D-alanine, used as an antitubercular agent. Catalyzes the hydrolysis of N(omega)-hydroxy-L-arginine (NHA) to yield hydroxyurea (HU) and L-ornithine. The protein is N(omega)-hydroxy-L-arginine amidinohydrolase of Streptomyces lavendulae.